The primary structure comprises 553 residues: CTP synthase (553 aa).

The tract at residues 1–270 (MTKYVFVTGG…DRLICEELRL (270 aa)) is amidoligase domain. CTP is bound at residue serine 13. Serine 13 lines the UTP pocket. ATP-binding positions include 14–19 (SLGKGI) and aspartate 71. Mg(2+) is bound by residues aspartate 71 and glutamate 144. Residues 151-153 (DIE), 191-196 (KTKPTQ), and lysine 227 contribute to the CTP site. UTP-binding positions include 191-196 (KTKPTQ) and lysine 227. In terms of domain architecture, Glutamine amidotransferase type-1 spans 295–547 (TIGMVGKYVD…VQAALACQQT (253 aa)). Glycine 356 is an L-glutamine binding site. The Nucleophile; for glutamine hydrolysis role is filled by cysteine 383. L-glutamine contacts are provided by residues 384–387 (LGMQ), glutamate 407, and arginine 473. Catalysis depends on residues histidine 520 and glutamate 522.

Belongs to the CTP synthase family. In terms of assembly, homotetramer.

It carries out the reaction UTP + L-glutamine + ATP + H2O = CTP + L-glutamate + ADP + phosphate + 2 H(+). The catalysed reaction is L-glutamine + H2O = L-glutamate + NH4(+). The enzyme catalyses UTP + NH4(+) + ATP = CTP + ADP + phosphate + 2 H(+). It functions in the pathway pyrimidine metabolism; CTP biosynthesis via de novo pathway; CTP from UDP: step 2/2. Allosterically activated by GTP, when glutamine is the substrate; GTP has no effect on the reaction when ammonia is the substrate. The allosteric effector GTP functions by stabilizing the protein conformation that binds the tetrahedral intermediate(s) formed during glutamine hydrolysis. Inhibited by the product CTP, via allosteric rather than competitive inhibition. Functionally, catalyzes the ATP-dependent amination of UTP to CTP with either L-glutamine or ammonia as the source of nitrogen. Regulates intracellular CTP levels through interactions with the four ribonucleotide triphosphates. The sequence is that of CTP synthase from Burkholderia mallei (strain NCTC 10247).